The following is an 846-amino-acid chain: Aminopeptidase N (846 aa).

Substrate is bound by residues glutamate 120 and 252 to 256; that span reads GAMEN. Residue histidine 288 coordinates Zn(2+). Catalysis depends on glutamate 289, which acts as the Proton acceptor. Zn(2+) is bound by residues histidine 292 and glutamate 311.

Belongs to the peptidase M1 family. In terms of assembly, monomer. Requires Zn(2+) as cofactor.

It is found in the cytoplasm. The enzyme catalyses Release of an N-terminal amino acid, Xaa-|-Yaa- from a peptide, amide or arylamide. Xaa is preferably Ala, but may be most amino acids including Pro (slow action). When a terminal hydrophobic residue is followed by a prolyl residue, the two may be released as an intact Xaa-Pro dipeptide.. Aminopeptidase with broad substrate specificity to several peptides. It has more affinity for oligopeptides than for dipeptides. It plays an essential role in the metabolism, it may be involved in nitrogen supply or protein turnover. The polypeptide is Aminopeptidase N (pepN) (Lactococcus lactis subsp. cremoris (strain MG1363)).